Consider the following 200-residue polypeptide: MARYTGPSWKVSRRLGISLSGTGKELERRPYAPGQHGPTQRKKISEYGLQQAEKQKLRHMYGLTERQFKNTFNKAGKLQGKHGENFMILLEQRLDNIVYRLGLARTRRAARQLVNHGHITVDGKRVDIPSYQVSVGQVISVREKSAKNSAIAESLDVSSFVPEYVTFDAETLTGSLNRIPERSELAAEINEAFIVEFYSR.

The disordered stretch occupies residues 22-43; the sequence is TGKELERRPYAPGQHGPTQRKK. Positions 92-170 constitute an S4 RNA-binding domain; the sequence is QRLDNIVYRL…VPEYVTFDAE (79 aa).

It belongs to the universal ribosomal protein uS4 family. In terms of assembly, part of the 30S ribosomal subunit. Contacts protein S5. The interaction surface between S4 and S5 is involved in control of translational fidelity.

Its function is as follows. One of the primary rRNA binding proteins, it binds directly to 16S rRNA where it nucleates assembly of the body of the 30S subunit. With S5 and S12 plays an important role in translational accuracy. This chain is Small ribosomal subunit protein uS4, found in Listeria welshimeri serovar 6b (strain ATCC 35897 / DSM 20650 / CCUG 15529 / CIP 8149 / NCTC 11857 / SLCC 5334 / V8).